Here is a 242-residue protein sequence, read N- to C-terminus: 7-cyano-7-deazaguanine synthase (242 aa).

12 to 22 is an ATP binding site; the sequence is FSGGQDSTTCL. Cys200, Cys215, Cys218, and Cys221 together coordinate Zn(2+).

Belongs to the QueC family. It depends on Zn(2+) as a cofactor.

It catalyses the reaction 7-carboxy-7-deazaguanine + NH4(+) + ATP = 7-cyano-7-deazaguanine + ADP + phosphate + H2O + H(+). Its pathway is purine metabolism; 7-cyano-7-deazaguanine biosynthesis. Catalyzes the ATP-dependent conversion of 7-carboxy-7-deazaguanine (CDG) to 7-cyano-7-deazaguanine (preQ(0)). In Nitratidesulfovibrio vulgaris (strain ATCC 29579 / DSM 644 / CCUG 34227 / NCIMB 8303 / VKM B-1760 / Hildenborough) (Desulfovibrio vulgaris), this protein is 7-cyano-7-deazaguanine synthase.